Reading from the N-terminus, the 262-residue chain is Acyl-[acyl-carrier-protein]--UDP-N-acetylglucosamine O-acyltransferase (262 aa).

Belongs to the transferase hexapeptide repeat family. LpxA subfamily. In terms of assembly, homotrimer.

The protein resides in the cytoplasm. The enzyme catalyses a (3R)-hydroxyacyl-[ACP] + UDP-N-acetyl-alpha-D-glucosamine = a UDP-3-O-[(3R)-3-hydroxyacyl]-N-acetyl-alpha-D-glucosamine + holo-[ACP]. The protein operates within glycolipid biosynthesis; lipid IV(A) biosynthesis; lipid IV(A) from (3R)-3-hydroxytetradecanoyl-[acyl-carrier-protein] and UDP-N-acetyl-alpha-D-glucosamine: step 1/6. Involved in the biosynthesis of lipid A, a phosphorylated glycolipid that anchors the lipopolysaccharide to the outer membrane of the cell. This Mannheimia succiniciproducens (strain KCTC 0769BP / MBEL55E) protein is Acyl-[acyl-carrier-protein]--UDP-N-acetylglucosamine O-acyltransferase.